Here is a 210-residue protein sequence, read N- to C-terminus: Putative methyltransferase ECU09_1500 (210 aa).

The protein belongs to the methyltransferase superfamily.

This is Putative methyltransferase ECU09_1500 from Encephalitozoon cuniculi (strain GB-M1) (Microsporidian parasite).